The following is a 251-amino-acid chain: Chlorophyll a-b binding protein 4, chloroplastic (251 aa).

A Phosphoserine modification is found at Ser35. Residue Trp57 coordinates chlorophyll b. Chlorophyll a is bound by residues Phe77 and Glu96. Arg101 contacts chlorophyll b. Helical transmembrane passes span 102–122 (WAMLGVAGMLLPEVFTKIGII) and 135–155 (YFASSSTLFVIEFILFHYVEI). Residues Ser138, Val144, Glu154, and Arg157 each coordinate chlorophyll b. Positions 204, 205, 208, 210, 222, and 237 each coordinate chlorophyll a.

This sequence belongs to the light-harvesting chlorophyll a/b-binding (LHC) protein family. In terms of assembly, the LHC complex consists of chlorophyll a-b binding proteins. Red-emitting heterodimer with LHCA1. The cofactor is Binds at least 14 chlorophylls (8 Chl-a and 6 Chl-b) and carotenoids such as lutein and neoxanthin.. In terms of processing, photoregulated by reversible phosphorylation of its threonine residues.

The protein resides in the plastid. The protein localises to the chloroplast thylakoid membrane. The light-harvesting complex (LHC) functions as a light receptor, it captures and delivers excitation energy to photosystems with which it is closely associated. In Arabidopsis thaliana (Mouse-ear cress), this protein is Chlorophyll a-b binding protein 4, chloroplastic.